Consider the following 635-residue polypeptide: Interferon-induced GTP-binding protein Mx1 (635 aa).

The Dynamin-type G domain maps to 31–309 (DLALPAIAVI…LVHHIELSLP (279 aa)). Residues 41–48 (GDQSSGKS) form a G1 motif region. 41–48 (GDQSSGKS) contributes to the GTP binding site. Positions 66–68 (VTR) are G2 motif. The G3 motif stretch occupies residues 147 to 150 (DLPG). Residues 147-151 (DLPGI) and 216-219 (TKPD) each bind GTP. The tract at residues 216–219 (TKPD) is G4 motif. Positions 248 to 251 (RCRG) are G5 motif. In terms of domain architecture, GED spans 549-635 (LEELMRHLKS…MEARNYLVKF (87 aa)).

This sequence belongs to the TRAFAC class dynamin-like GTPase superfamily. Dynamin/Fzo/YdjA family.

The protein resides in the cytoplasm. The sequence is that of Interferon-induced GTP-binding protein Mx1 (mx1) from Ictalurus punctatus (Channel catfish).